The primary structure comprises 277 residues: MRGSDQKILLMVMVVVAVVAAAQGQEETTGFVTWGNNYYQTWGHQALVINKTSELQLTLDKNSGSGFESQLIYGSGYFNVRIKAPQTTSTGVITSFYLISRSSRHDELCFQILGKNGPPYLLNTNMYLYGEGGKDQRFRLWFDPTKDYHSYSFLWNPNQLVFYVDDTPIRVYSKNPDVYYPSVQTMFLMGSVQNGSIIDPKQMPYIAKFQASKIEGCKTEFMGIDKCTDPKFWWNRKQLSSKEKTLYLNARKTYLDYDYCSDRQRYPKVPQECGSYT.

A signal peptide spans 1 to 24 (MRGSDQKILLMVMVVVAVVAAAQG). Positions 32 to 209 (VTWGNNYYQT…PKQMPYIAKF (178 aa)) constitute a GH16 domain. A glycan (N-linked (GlcNAc...) asparagine) is linked at Asn50. Glu107 functions as the Nucleophile in the catalytic mechanism. Xyloglucan is bound by residues 123–125 (NTN) and 133–135 (GKD). Asn194 carries an N-linked (GlcNAc...) asparagine glycan. Disulfide bonds link Cys217–Cys227 and Cys260–Cys273. Arg265 contacts xyloglucan.

It belongs to the glycosyl hydrolase 16 family. XTH group 1 subfamily. Contains at least one intrachain disulfide bond essential for its enzymatic activity.

The protein localises to the secreted. The protein resides in the cell wall. Its subcellular location is the extracellular space. It localises to the apoplast. It catalyses the reaction breaks a beta-(1-&gt;4) bond in the backbone of a xyloglucan and transfers the xyloglucanyl segment on to O-4 of the non-reducing terminal glucose residue of an acceptor, which can be a xyloglucan or an oligosaccharide of xyloglucan.. Its function is as follows. May catalyze xyloglucan endohydrolysis (XEH) and/or endotransglycosylation (XET). Cleaves and religates xyloglucan polymers, an essential constituent of the primary cell wall, and thereby participates in cell wall construction of growing tissues. This is Probable xyloglucan endotransglucosylase/hydrolase protein 11 (XTH11) from Arabidopsis thaliana (Mouse-ear cress).